The chain runs to 386 residues: Inactive GDSL esterase/lipase-like protein 23 (386 aa).

The signal sequence occupies residues 1–29 (MMAKNCNLVSVLCVFLVLTLFNKPITVAG). S43 (nucleophile) is an active-site residue. N105, N165, and N288 each carry an N-linked (GlcNAc...) asparagine glycan. Active-site residues include D322 and H325.

This sequence belongs to the 'GDSL' lipolytic enzyme family. As to quaternary structure, part of the PYK10 complex. Interacts with MVP1. Expressed mainly in roots.

It is found in the endoplasmic reticulum. Its function is as follows. Involved in the control of the PYK10 complex size and possibly substrate specificity. May be exported from the endoplasmic reticulum upon interaction with MVP1. The chain is Inactive GDSL esterase/lipase-like protein 23 (GLL23) from Arabidopsis thaliana (Mouse-ear cress).